The primary structure comprises 498 residues: ATP synthase subunit beta, chloroplastic (498 aa).

172 to 179 (GGAGVGKT) contributes to the ATP binding site.

It belongs to the ATPase alpha/beta chains family. F-type ATPases have 2 components, CF(1) - the catalytic core - and CF(0) - the membrane proton channel. CF(1) has five subunits: alpha(3), beta(3), gamma(1), delta(1), epsilon(1). CF(0) has four main subunits: a(1), b(1), b'(1) and c(9-12).

It is found in the plastid. Its subcellular location is the chloroplast thylakoid membrane. The catalysed reaction is ATP + H2O + 4 H(+)(in) = ADP + phosphate + 5 H(+)(out). Its function is as follows. Produces ATP from ADP in the presence of a proton gradient across the membrane. The catalytic sites are hosted primarily by the beta subunits. The polypeptide is ATP synthase subunit beta, chloroplastic (Myristica fragrans (Nutmeg)).